Here is a 458-residue protein sequence, read N- to C-terminus: Periphilin-1 (458 aa).

2 stretches are compositionally biased toward basic and acidic residues: residues 1-18 (MWSE…ERAP) and 63-107 (EGRS…DGFR). Disordered stretches follow at residues 1-51 (MWSE…SYNR) and 63-284 (EGRS…LFED). The Nuclear localization signal signature appears at 103 to 109 (RDGFRRK). A Glycyl lysine isopeptide (Lys-Gly) (interchain with G-Cter in SUMO2) cross-link involves residue Lys109. Phosphoserine occurs at positions 110, 114, 133, and 140. Basic and acidic residues predominate over residues 116 to 142 (YARERSPYKRDNTFFRESPVGRKDSPH). Residues 143 to 154 (SRSGSSVSSRSY) are compositionally biased toward low complexity. Lys160 is covalently cross-linked (Glycyl lysine isopeptide (Lys-Gly) (interchain with G-Cter in SUMO2)). Phosphoserine is present on residues Ser161 and Ser167. Lys180 is covalently cross-linked (Glycyl lysine isopeptide (Lys-Gly) (interchain with G-Cter in SUMO2)). Positions 181–194 (RQNEGNPERDKERP) are enriched in basic and acidic residues. Position 197 is a phosphoserine (Ser197). Residue Lys199 forms a Glycyl lysine isopeptide (Lys-Gly) (interchain with G-Cter in SUMO2) linkage. Residues Ser201 and Ser205 each carry the phosphoserine modification. Residues 205-215 (SPSSGSAVSSS) are compositionally biased toward low complexity. Residues 217-230 (VLDKPSRLTEKELA) are compositionally biased toward basic and acidic residues. Lys227 is covalently cross-linked (Glycyl lysine isopeptide (Lys-Gly) (interchain with G-Cter in SUMO2)). N6-acetyllysine; alternate occurs at positions 235 and 240. Glycyl lysine isopeptide (Lys-Gly) (interchain with G-Cter in SUMO2); alternate cross-links involve residues Lys235 and Lys240. Residues 237–246 (AAEKLEKSDE) are compositionally biased toward basic and acidic residues. The residue at position 325 (Ser325) is a Phosphoserine. Lys328 participates in a covalent cross-link: Glycyl lysine isopeptide (Lys-Gly) (interchain with G-Cter in SUMO2). A disordered region spans residues 345–406 (GQTWQQVPPV…TQLRRTTGAP (62 aa)). Residues 377–386 (PQPPQAPQPL) show a composition bias toward pro residues. The span at 388 to 398 (PRKKRVRRTTQ) shows a compositional bias: basic residues. A Glycyl lysine isopeptide (Lys-Gly) (interchain with G-Cter in SUMO2) cross-link involves residue Lys453.

As to quaternary structure, homodimer. Component of the HUSH complex; at least composed of TASOR, PPHLN1 and MPHOSPH8. Interacts with SIN3A and HDAC1. May interact with PPL. Substrate of transglutaminase (in vitro). Ubiquitous.

The protein localises to the nucleus. The protein resides in the cytoplasm. It is found in the chromosome. Its function is as follows. Component of the HUSH complex, a multiprotein complex that mediates epigenetic repression. The HUSH complex is recruited to genomic loci rich in H3K9me3 and is probably required to maintain transcriptional silencing by promoting recruitment of SETDB1, a histone methyltransferase that mediates further deposition of H3K9me3. In the HUSH complex, contributes to the maintenance of the complex at chromatin. Acts as a transcriptional corepressor and regulates the cell cycle, probably via the HUSH complex. The HUSH complex is also involved in the silencing of unintegrated retroviral DNA: some part of the retroviral DNA formed immediately after infection remains unintegrated in the host genome and is transcriptionally repressed. May be involved in epithelial differentiation by contributing to epidermal integrity and barrier formation. The protein is Periphilin-1 of Homo sapiens (Human).